The chain runs to 157 residues: Protein Smg homolog (157 aa).

Belongs to the Smg family.

This Shewanella pealeana (strain ATCC 700345 / ANG-SQ1) protein is Protein Smg homolog.